Consider the following 277-residue polypeptide: MTLPEHSPLGKPSAYKTEYDASLLFPIPRQPKRAEIGLPEGRALPFFGVDIWNAYEVSWLNLKGKPQVALATFIIPADTPNIVESKSFKLYLNSFNQTKIASPEALQQLLHHDLSEATGGTVQVRLVTEADLGTQKMGELDGLLLDRLDIETDIYEPDPTLLSAEQEESPVEETLVSHLLKSNCLVTGQPDWGSVQIRYVGAPIDQEGLLKYLISFRNHNEFHEQCVERIFTDVMRMCKPVKLAVYARYTRRGGLDINPFRTNYNTPWPDNRRNARQ.

Residue 83–85 (VES) coordinates substrate. An NADPH-binding site is contributed by 85–86 (SK). Catalysis depends on C184, which acts as the Thioimide intermediate. The Proton donor role is filled by D191. Substrate is bound at residue 223–224 (HE). 252 to 253 (RG) serves as a coordination point for NADPH.

Belongs to the GTP cyclohydrolase I family. QueF type 2 subfamily. Homodimer.

It localises to the cytoplasm. The enzyme catalyses 7-aminomethyl-7-carbaguanine + 2 NADP(+) = 7-cyano-7-deazaguanine + 2 NADPH + 3 H(+). The protein operates within tRNA modification; tRNA-queuosine biosynthesis. In terms of biological role, catalyzes the NADPH-dependent reduction of 7-cyano-7-deazaguanine (preQ0) to 7-aminomethyl-7-deazaguanine (preQ1). The protein is NADPH-dependent 7-cyano-7-deazaguanine reductase of Cupriavidus metallidurans (strain ATCC 43123 / DSM 2839 / NBRC 102507 / CH34) (Ralstonia metallidurans).